A 281-amino-acid chain; its full sequence is 32 kDa heat shock protein (281 aa).

Residues 142 to 168 (EDDEEIDSDEEFGDSDQDEEDSDDEEI) are compositionally biased toward acidic residues. The segment at 142–281 (EDDEEIDSDE…NENNKKKQKN (140 aa)) is disordered. The span at 180-209 (KITEISEVPESKKEKTPEPKKVPEPKKEQV) shows a compositional bias: basic and acidic residues. Positions 210 to 273 (KQPTQPQQKK…NNKRPQNQNE (64 aa)) are enriched in low complexity.

The chain is 32 kDa heat shock protein (hspC) from Dictyostelium discoideum (Social amoeba).